A 123-amino-acid chain; its full sequence is Small ribosomal subunit protein uS13 (123 aa).

Residues 92–123 are disordered; it reads RKGLPVRGQKTKTNARTRKGPKKLVGAKKKSK.

This sequence belongs to the universal ribosomal protein uS13 family. Part of the 30S ribosomal subunit. Forms a loose heterodimer with protein S19. Forms two bridges to the 50S subunit in the 70S ribosome.

Functionally, located at the top of the head of the 30S subunit, it contacts several helices of the 16S rRNA. In the 70S ribosome it contacts the 23S rRNA (bridge B1a) and protein L5 of the 50S subunit (bridge B1b), connecting the 2 subunits; these bridges are implicated in subunit movement. Contacts the tRNAs in the A and P-sites. The sequence is that of Small ribosomal subunit protein uS13 from Clostridium kluyveri (strain NBRC 12016).